We begin with the raw amino-acid sequence, 830 residues long: MIKSLLKSLLDDDEREVKKLRRTVEVINSLEAEFQELAEEEFPQKTGEFKERLKNGEELDDILPEAFALVREASQRVLGMRHFDVQLIGGMVLHQGRIAEMKTGEGKTLVATLPAYLNALEGKGVHIVTVNDYLAARDADWMGPVLEYCGLSVGLIVHGLSYEERKAAYACDVTYGTNNEMGFDYLRDNMVVSADNMVQRELHYAIIDEVDSILVDEARTPLIISGEGDKPTTLYYQIAKFIPRLRNEEDYKVDEKAHVVTLTEEGVKKVEKYFTIENLSENMELAHHVNQGLKAHSLMKRDRDYVIKDEQVIIVDEFTGRLMFGRRYSDGLHQAIEAKEGVKIEKESQTLATITFQNYFRMYHKLGGMTGTAKTEEEEFRKIYGMDVVSIPTHNPMIREDQADMVYRTEEGKFRAVVEDIISRHQAKQPVLVGTISVEKSEYLSAMLAKRGVKHQVLNAKYHEKEAQIIAQAGQEETVTIATNMAGRGTDIVLGEGIQELGGLYVLGTERHESRRIDNQLRGRSGRQGDPGESRFYVSLEDDLMRLFGSANVEGLMDRLGMDDDMPIEHKMISRAIESAQKKVEARNFSIRKNVLEYDDVINQQREVMYGERRKVLFGEDLKETVASMVDDVIEQAVERFAGEFKYSDEWDLPGFLSYIEQSIIPQPDFNQEDMRGMRKNEVVAFLAEKTQTLYEQREKEMGSEIMRELEKAILLRIIDEKWMDHIDAMDQLRNGISLRAYGQKDPLIEYKFEAFEAFQMMIESMKEDVVRYIFRVKVVQQPEERKTFENQGEEAEKKPVRVGKKIGRNDLCPCGSGKKYKKCCGRGVS.

ATP contacts are provided by residues glutamine 86, 104–108 (GEGKT), and aspartate 491. Residues cysteine 813, cysteine 815, cysteine 824, and cysteine 825 each contribute to the Zn(2+) site.

The protein belongs to the SecA family. Monomer and homodimer. Part of the essential Sec protein translocation apparatus which comprises SecA, SecYEG and auxiliary proteins SecDF. Other proteins may also be involved. Zn(2+) is required as a cofactor.

It localises to the cell membrane. It is found in the cytoplasm. The enzyme catalyses ATP + H2O + cellular proteinSide 1 = ADP + phosphate + cellular proteinSide 2.. Functionally, part of the Sec protein translocase complex. Interacts with the SecYEG preprotein conducting channel. Has a central role in coupling the hydrolysis of ATP to the transfer of proteins into and across the cell membrane, serving as an ATP-driven molecular motor driving the stepwise translocation of polypeptide chains across the membrane. This Syntrophomonas wolfei subsp. wolfei (strain DSM 2245B / Goettingen) protein is Protein translocase subunit SecA.